The chain runs to 368 residues: 1-deoxy-D-xylulose 5-phosphate reductoisomerase (368 aa).

Residues T10, G11, S12, I13, Q38, and N100 each contribute to the NADPH site. K101 serves as a coordination point for 1-deoxy-D-xylulose 5-phosphate. E102 is a binding site for NADPH. D125 provides a ligand contact to Mn(2+). 1-deoxy-D-xylulose 5-phosphate is bound by residues S126, E127, S151, and H172. E127 serves as a coordination point for Mn(2+). NADPH is bound at residue G178. 1-deoxy-D-xylulose 5-phosphate is bound by residues S185, N190, K191, and E194. Mn(2+) is bound at residue E194.

It belongs to the DXR family. It depends on Mg(2+) as a cofactor. Mn(2+) is required as a cofactor.

The catalysed reaction is 2-C-methyl-D-erythritol 4-phosphate + NADP(+) = 1-deoxy-D-xylulose 5-phosphate + NADPH + H(+). It participates in isoprenoid biosynthesis; isopentenyl diphosphate biosynthesis via DXP pathway; isopentenyl diphosphate from 1-deoxy-D-xylulose 5-phosphate: step 1/6. Catalyzes the NADPH-dependent rearrangement and reduction of 1-deoxy-D-xylulose-5-phosphate (DXP) to 2-C-methyl-D-erythritol 4-phosphate (MEP). This is 1-deoxy-D-xylulose 5-phosphate reductoisomerase from Tropheryma whipplei (strain TW08/27) (Whipple's bacillus).